The following is a 378-amino-acid chain: Putative glutamate--cysteine ligase 2 (378 aa).

This sequence belongs to the glutamate--cysteine ligase type 2 family. YbdK subfamily.

It catalyses the reaction L-cysteine + L-glutamate + ATP = gamma-L-glutamyl-L-cysteine + ADP + phosphate + H(+). In terms of biological role, ATP-dependent carboxylate-amine ligase which exhibits weak glutamate--cysteine ligase activity. This chain is Putative glutamate--cysteine ligase 2, found in Salinispora arenicola (strain CNS-205).